The primary structure comprises 88 residues: Auxin-responsive protein SAUR21 (88 aa).

The protein belongs to the ARG7 family.

It is found in the cell membrane. Its function is as follows. Functions as a positive effector of cell expansion through modulation of auxin transport. This is Auxin-responsive protein SAUR21 from Arabidopsis thaliana (Mouse-ear cress).